A 426-amino-acid chain; its full sequence is MPVSDDLLRATDPLVAGWIDRELNRQRSHLELIASENFTSAAVMAAQGSVLTNKYAEGLPSKRYYGGCEFVDAVEQIAIDRAKALFGAAHANVQPHSGAQANAAVFLALLERGDKILGMDLSHGGHLTHGSPVNQSGIYFEALHYGVDPASHRIDFDQVRELAHAHRPKLIICGYSAYPRVIDFECFREIADEVGAYLLADIAHIAGLVVAGVHPNPIPHCDVVTTTTHKTLRGPRGGLILTRDEALGKRFDKAVFPGTQGGPLEHVIAAKAVAFGEALQPEFKTYAADVVANARALAERLTARGLTLVSGGTDNHLMLVDLRSVDLTGKQADLLMSDVNITTNKNTIPFDPQSPFVTSGLRLGSPAMTTRGLGTTEFGEIGEIIANRLTQPTDARVVADCLERVASLCTRFALYPHLGRVVAPVG.

(6S)-5,6,7,8-tetrahydrofolate-binding positions include leucine 121 and 125-127 (GHL). The residue at position 230 (lysine 230) is an N6-(pyridoxal phosphate)lysine. Residue 354 to 356 (SPF) participates in (6S)-5,6,7,8-tetrahydrofolate binding.

It belongs to the SHMT family. Homodimer. The cofactor is pyridoxal 5'-phosphate.

It is found in the cytoplasm. The catalysed reaction is (6R)-5,10-methylene-5,6,7,8-tetrahydrofolate + glycine + H2O = (6S)-5,6,7,8-tetrahydrofolate + L-serine. It participates in one-carbon metabolism; tetrahydrofolate interconversion. Its pathway is amino-acid biosynthesis; glycine biosynthesis; glycine from L-serine: step 1/1. Functionally, catalyzes the reversible interconversion of serine and glycine with tetrahydrofolate (THF) serving as the one-carbon carrier. This reaction serves as the major source of one-carbon groups required for the biosynthesis of purines, thymidylate, methionine, and other important biomolecules. Also exhibits THF-independent aldolase activity toward beta-hydroxyamino acids, producing glycine and aldehydes, via a retro-aldol mechanism. This is Serine hydroxymethyltransferase from Gloeobacter violaceus (strain ATCC 29082 / PCC 7421).